Here is a 347-residue protein sequence, read N- to C-terminus: Selenide, water dikinase (347 aa).

The active site involves Cys-17. Residues Lys-20 and 48-50 (TRD) contribute to the ATP site. Mg(2+) is bound at residue Asp-51. Residues Asp-68, Asp-91, and 139–141 (GHS) contribute to the ATP site. Asp-91 contributes to the Mg(2+) binding site. Residue Asp-227 coordinates Mg(2+).

Belongs to the selenophosphate synthase 1 family. Class I subfamily. In terms of assembly, homodimer. Mg(2+) is required as a cofactor.

The catalysed reaction is hydrogenselenide + ATP + H2O = selenophosphate + AMP + phosphate + 2 H(+). Synthesizes selenophosphate from selenide and ATP. The chain is Selenide, water dikinase from Salmonella typhimurium (strain LT2 / SGSC1412 / ATCC 700720).